Consider the following 548-residue polypeptide: MSGDTGPSKQGGTRYGSISSPPSPGPQQAPPGGTYLGEKIPIPDTESGAFSLRKLWAFTGPGFLMSIAFLDPGNIESDLQAGAVAGFKLLWVLLWATVLGLLCQRLAARLGVVTGKDLGEVCHLYYPKVPRILLWLTIELAIVGSDMQEVIGTAIAFSLLSAGRIPLWGGVLITVVDTFFFLFLDNYGLRKLEAFFGFLITIMALTFGYEYVVAQPAQGALLQGLFLPSCRGCGQPELLQAVGIIGAIIMPHNIYLHSSLVKSREVDRSRRADIREANMYFLIEATIALSVSFLINLFVMAVFGQAFYKQTNQAAFNICAKSSLHDYAPIFPRNNLTVAVDIYQGGVILGCLFGPAALYIWAVGLLAAGQSSTMTGTYAGQFVMEGFLKLRWSRFARVLLTRSCAILPTVLLAVFRDLRDLSGLNDLLNVLQSLLLPFAVLPILTFTSMPALMQEFANGLVSKVITSSIMVLVCAVNLYFVISYVPSLPHPAYFSLVALLAAAYLGLTTYLVWTCLITQGATFLAHNSHQRFLYGLPEEDQEKGRTSG.

Polar residues predominate over residues 1-11; sequence MSGDTGPSKQG. The interval 1–38 is disordered; sequence MSGDTGPSKQGGTRYGSISSPPSPGPQQAPPGGTYLGE. At 1–55 the chain is on the cytoplasmic side; the sequence is MSGDTGPSKQGGTRYGSISSPPSPGPQQAPPGGTYLGEKIPIPDTESGAFSLRKL. Residues 56 to 73 form a helical membrane-spanning segment; the sequence is WAFTGPGFLMSIAFLDPG. The Extracellular portion of the chain corresponds to 74–82; the sequence is NIESDLQAG. A helical transmembrane segment spans residues 83–102; sequence AVAGFKLLWVLLWATVLGLL. Topologically, residues 103–139 are cytoplasmic; the sequence is CQRLAARLGVVTGKDLGEVCHLYYPKVPRILLWLTIE. The chain crosses the membrane as a helical span at residues 140–160; the sequence is LAIVGSDMQEVIGTAIAFSLL. The Extracellular portion of the chain corresponds to 161–164; the sequence is SAGR. The chain crosses the membrane as a helical span at residues 165 to 184; sequence IPLWGGVLITVVDTFFFLFL. The Cytoplasmic portion of the chain corresponds to 185–193; that stretch reads DNYGLRKLE. The chain crosses the membrane as a helical span at residues 194-214; it reads AFFGFLITIMALTFGYEYVVA. Residues 215-237 lie on the Extracellular side of the membrane; that stretch reads QPAQGALLQGLFLPSCRGCGQPE. Residues 238-256 traverse the membrane as a helical segment; it reads LLQAVGIIGAIIMPHNIYL. Residues 257-284 are Cytoplasmic-facing; the sequence is HSSLVKSREVDRSRRADIREANMYFLIE. The chain crosses the membrane as a helical span at residues 285–304; the sequence is ATIALSVSFLINLFVMAVFG. Residues 305-346 lie on the Extracellular side of the membrane; that stretch reads QAFYKQTNQAAFNICAKSSLHDYAPIFPRNNLTVAVDIYQGG. Asparagine 335 carries N-linked (GlcNAc...) asparagine glycosylation. Residues 347 to 366 form a helical membrane-spanning segment; that stretch reads VILGCLFGPAALYIWAVGLL. Topologically, residues 367–397 are cytoplasmic; sequence AAGQSSTMTGTYAGQFVMEGFLKLRWSRFAR. A helical transmembrane segment spans residues 398 to 415; sequence VLLTRSCAILPTVLLAVF. Residues 416–426 lie on the Extracellular side of the membrane; that stretch reads RDLRDLSGLND. Residues 427–447 traverse the membrane as a helical segment; sequence LLNVLQSLLLPFAVLPILTFT. Residues 448-463 are Cytoplasmic-facing; the sequence is SMPALMQEFANGLVSK. A helical transmembrane segment spans residues 464–485; it reads VITSSIMVLVCAVNLYFVISYV. At 486–493 the chain is on the extracellular side; the sequence is PSLPHPAY. The chain crosses the membrane as a helical span at residues 494 to 513; sequence FSLVALLAAAYLGLTTYLVW. Residues 514–548 are Cytoplasmic-facing; it reads TCLITQGATFLAHNSHQRFLYGLPEEDQEKGRTSG.

The protein belongs to the NRAMP family.

The protein localises to the late endosome membrane. It localises to the lysosome membrane. It carries out the reaction Zn(2+)(in) + H(+)(out) = Zn(2+)(out) + H(+)(in). The enzyme catalyses Fe(2+)(in) + H(+)(out) = Fe(2+)(out) + H(+)(in). The catalysed reaction is Mn(2+)(in) + H(+)(out) = Mn(2+)(out) + H(+)(in). Its function is as follows. Macrophage-specific antiporter that fluxes metal ions in either direction against a proton gradient. Localized to late endosomal lysosomal membranes, delivers bivalent cations from the cytosol into these acidic compartments where they may directly affect antimicrobial activity. Involved in iron metabolism and host natural resistance to infection with intracellular parasites. Pathogen resistance involves sequestration of Fe(2+) and Mn(2+), cofactors of both prokaryotic and eukaryotic catalases and superoxide dismutases, not only to protect the macrophage against its own generation of reactive oxygen species, but to deny the cations to the pathogen for synthesis of its protective enzymes. The chain is Natural resistance-associated macrophage protein 1 (SLC11A1) from Bubalus bubalis (Domestic water buffalo).